The primary structure comprises 414 residues: Arginine deiminase (414 aa).

The active-site Amidino-cysteine intermediate is Cys402.

Belongs to the arginine deiminase family.

The protein resides in the cytoplasm. It catalyses the reaction L-arginine + H2O = L-citrulline + NH4(+). The protein operates within amino-acid degradation; L-arginine degradation via ADI pathway; carbamoyl phosphate from L-arginine: step 1/2. This is Arginine deiminase from Oenococcus oeni (strain ATCC BAA-331 / PSU-1).